A 451-amino-acid chain; its full sequence is Deoxyguanosinetriphosphate triphosphohydrolase-like protein (451 aa).

In terms of domain architecture, HD spans 61–274; sequence RLTHSLEVAQ…MELADDIAYG (214 aa).

Belongs to the dGTPase family. Type 2 subfamily.

This Actinobacillus succinogenes (strain ATCC 55618 / DSM 22257 / CCUG 43843 / 130Z) protein is Deoxyguanosinetriphosphate triphosphohydrolase-like protein.